A 116-amino-acid polypeptide reads, in one-letter code: Ribonuclease P protein component 2 (116 aa).

Belongs to the eukaryotic/archaeal RNase P protein component 2 family. In terms of assembly, consists of a catalytic RNA component and at least 4-5 protein subunits.

It localises to the cytoplasm. It carries out the reaction Endonucleolytic cleavage of RNA, removing 5'-extranucleotides from tRNA precursor.. Part of ribonuclease P, a protein complex that generates mature tRNA molecules by cleaving their 5'-ends. This chain is Ribonuclease P protein component 2, found in Methanosarcina mazei (strain ATCC BAA-159 / DSM 3647 / Goe1 / Go1 / JCM 11833 / OCM 88) (Methanosarcina frisia).